Consider the following 217-residue polypeptide: 3,4-dihydroxy-2-butanone 4-phosphate synthase (217 aa).

Residues 37–38, aspartate 42, 150–154, and glutamate 174 contribute to the D-ribulose 5-phosphate site; these read RE and RGGHT. Glutamate 38 lines the Mg(2+) pocket. Histidine 153 is a Mg(2+) binding site.

Belongs to the DHBP synthase family. Homodimer. Requires Mg(2+) as cofactor. The cofactor is Mn(2+).

The enzyme catalyses D-ribulose 5-phosphate = (2S)-2-hydroxy-3-oxobutyl phosphate + formate + H(+). It participates in cofactor biosynthesis; riboflavin biosynthesis; 2-hydroxy-3-oxobutyl phosphate from D-ribulose 5-phosphate: step 1/1. In terms of biological role, catalyzes the conversion of D-ribulose 5-phosphate to formate and 3,4-dihydroxy-2-butanone 4-phosphate. This is 3,4-dihydroxy-2-butanone 4-phosphate synthase from Sodalis glossinidius (strain morsitans).